We begin with the raw amino-acid sequence, 407 residues long: MSRYHTFTAADAVEYARQFGQVADPQALVTADEIGDGNLNLVFKIRDTAGISRVIVKQALPYVRCVGESWPLTLDRARIEAETLLTHSQFCPQHTVKVLHHDAELAVMVQEDLSDHHIWRHELIQGNYYPQAAEQLGEYLAQTLFHTSDFYQSAQAKKAAVSRYTNPELCQITEDLFFTDPYIDHERNNFDPVLLPEVLSLRQDKALKLAVASLKHRFLSQAEALLHGDIHSGSIFVADGRLKTIDAEFGFYGPIGFDIGTALGNLLLNYCGLPGLAGPRDAAAGREQRLKDVQTVWQTFAARFLALSQEKAQDPALATEGYAAQFLQHVWRDAIGYCGSELIRRTIGLAHVADLDSIDDEEMRRACQRHALSLGRALILVAPHVDDVGGVVARIRQSPSSLTPQRC.

ATP-binding positions include N40, K57, and 111 to 113; that span reads EDL. Residue D229 participates in substrate binding. 246–248 is a binding site for ATP; sequence DAE. R344 provides a ligand contact to substrate.

It belongs to the methylthioribose kinase family. In terms of assembly, homodimer.

It catalyses the reaction 5-(methylsulfanyl)-D-ribose + ATP = 5-(methylsulfanyl)-alpha-D-ribose 1-phosphate + ADP + H(+). It functions in the pathway amino-acid biosynthesis; L-methionine biosynthesis via salvage pathway; S-methyl-5-thio-alpha-D-ribose 1-phosphate from S-methyl-5'-thioadenosine (hydrolase route): step 2/2. Catalyzes the phosphorylation of methylthioribose into methylthioribose-1-phosphate. The protein is Methylthioribose kinase of Yersinia pseudotuberculosis serotype O:1b (strain IP 31758).